Here is a 142-residue protein sequence, read N- to C-terminus: MAKKIDAYIKLQVKSGSANPSPPVGPALGQKGVNIMEFCKAFNARTEKMEKGMPIPVVITVYSDRSFTFETKTPPASYLLKTAAGLKSGSPRPNTQKVGTIARAKIQEIAELKAADMTGADVEAMTRSIEGTARSMGLVVEG.

Belongs to the universal ribosomal protein uL11 family. Part of the ribosomal stalk of the 50S ribosomal subunit. Interacts with L10 and the large rRNA to form the base of the stalk. L10 forms an elongated spine to which L12 dimers bind in a sequential fashion forming a multimeric L10(L12)X complex. One or more lysine residues are methylated.

Functionally, forms part of the ribosomal stalk which helps the ribosome interact with GTP-bound translation factors. This Shewanella sp. (strain ANA-3) protein is Large ribosomal subunit protein uL11.